The following is a 502-amino-acid chain: Protein DETOXIFICATION 7 (502 aa).

12 helical membrane passes run 36–56 (MAAP…ISMV), 68–88 (AVAI…VGFA), 112–132 (YSSM…WFFM), 143–163 (PLIS…LFGF), 182–202 (LFVS…LLVY), 208–228 (IVGA…LLWI), 262–282 (AMMI…SGLL), 291–311 (VISI…AIGA), 331–351 (AAVN…TITL), 375–395 (ITPI…LSGV), 408–428 (ASLG…CFVM), and 436–456 (WIGI…VTFF).

It belongs to the multi antimicrobial extrusion (MATE) (TC 2.A.66.1) family.

The protein resides in the membrane. The polypeptide is Protein DETOXIFICATION 7 (Arabidopsis thaliana (Mouse-ear cress)).